We begin with the raw amino-acid sequence, 290 residues long: 4-hydroxybenzoate octaprenyltransferase (290 aa).

8 consecutive transmembrane segments (helical) span residues 33 to 53 (LAAL…AVFV), 91 to 111 (LGVR…FVLV), 116 to 136 (WEAV…PFTK), 138 to 158 (FFAM…VIAF), 165 to 185 (VPAT…AYDT), 212 to 232 (VAAI…VLAP), 237 to 257 (WPLW…FTLI), and 269 to 289 (FSKS…GYLL).

It belongs to the UbiA prenyltransferase family. Mg(2+) serves as cofactor.

The protein resides in the cell inner membrane. It carries out the reaction all-trans-octaprenyl diphosphate + 4-hydroxybenzoate = 4-hydroxy-3-(all-trans-octaprenyl)benzoate + diphosphate. Its pathway is cofactor biosynthesis; ubiquinone biosynthesis. Functionally, catalyzes the prenylation of para-hydroxybenzoate (PHB) with an all-trans polyprenyl group. Mediates the second step in the final reaction sequence of ubiquinone-8 (UQ-8) biosynthesis, which is the condensation of the polyisoprenoid side chain with PHB, generating the first membrane-bound Q intermediate 3-octaprenyl-4-hydroxybenzoate. The protein is 4-hydroxybenzoate octaprenyltransferase of Acidovorax ebreus (strain TPSY) (Diaphorobacter sp. (strain TPSY)).